We begin with the raw amino-acid sequence, 215 residues long: MGKVYDWFEERLEIQAIADDISSKYVPPHVNIFYCFGGIVFTCFLVQVATGFAMTFYYRPSVVDAFASVEYIMTSVNFGWLIRSIHRWSASMMVMMMVLHVFRVYLTGGFKKPRELTWVTGVILAVVTVSFGVTGYSLPWDQVGFWACKIVTGVPAAVPVVGPPLVLVLRGGESVGQSTLTRFYSAHTFVLPLAAAVLMLTHFLMIRKQGISGPL.

A helical transmembrane segment spans residues 32–52 (IFYCFGGIVFTCFLVQVATGF). Residue Cys-35 coordinates heme c. His-86 and His-100 together coordinate heme b. 3 consecutive transmembrane segments (helical) span residues 90 to 110 (ASMM…TGGF), 116 to 136 (LTWV…VTGY), and 186 to 206 (AHTF…FLMI). Heme b-binding residues include His-187 and His-202.

Belongs to the cytochrome b family. PetB subfamily. The 4 large subunits of the cytochrome b6-f complex are cytochrome b6, subunit IV (17 kDa polypeptide, PetD), cytochrome f and the Rieske protein, while the 4 small subunits are PetG, PetL, PetM and PetN. The complex functions as a dimer. Heme b is required as a cofactor. The cofactor is heme c.

It is found in the plastid. The protein resides in the chloroplast thylakoid membrane. Component of the cytochrome b6-f complex, which mediates electron transfer between photosystem II (PSII) and photosystem I (PSI), cyclic electron flow around PSI, and state transitions. In Trieres chinensis (Marine centric diatom), this protein is Cytochrome b6.